We begin with the raw amino-acid sequence, 429 residues long: Adenylosuccinate synthetase (429 aa).

GTP-binding positions include 12-18 (GDEGKGK) and 40-42 (GHT). Residue Asp-13 is the Proton acceptor of the active site. Residues Asp-13 and Gly-40 each coordinate Mg(2+). Residues 13-16 (DEGK), 38-41 (NAGH), Thr-128, Arg-142, Gln-223, Thr-238, and Arg-302 contribute to the IMP site. Residue His-41 is the Proton donor of the active site. 298–304 (TTTGRPR) contacts substrate. GTP is bound by residues Arg-304, 330 to 332 (SID), and 412 to 414 (SVG).

The protein belongs to the adenylosuccinate synthetase family. Homodimer. The cofactor is Mg(2+).

The protein resides in the cytoplasm. The catalysed reaction is IMP + L-aspartate + GTP = N(6)-(1,2-dicarboxyethyl)-AMP + GDP + phosphate + 2 H(+). It participates in purine metabolism; AMP biosynthesis via de novo pathway; AMP from IMP: step 1/2. Its function is as follows. Plays an important role in the de novo pathway of purine nucleotide biosynthesis. Catalyzes the first committed step in the biosynthesis of AMP from IMP. The chain is Adenylosuccinate synthetase from Bacillus cereus (strain ZK / E33L).